Reading from the N-terminus, the 557-residue chain is Suprabasin (557 aa).

A signal peptide spans 1-23 (MHLASLLSSCSLLLLLGALPGWA). Disordered regions lie at residues 150–175 (RFGQ…GAHH), 422–441 (GQGA…KVAQ), 464–490 (AAGQ…GKQE), and 509–533 (NQLL…TTLT). Low complexity predominate over residues 153–175 (QGAHHATGQAGKEAEKFGQGAHH). Low complexity predominate over residues 476–487 (GQGVHHAAGQAG).

It is found in the secreted. The protein is Suprabasin (SBSN) of Bos taurus (Bovine).